The following is a 769-amino-acid chain: Zinc finger protein 585B (769 aa).

The span at 1 to 12 (MPASWTSPQKSS) shows a compositional bias: polar residues. The interval 1–23 (MPASWTSPQKSSALAPDDHGSSY) is disordered. Positions 27–97 (VSFRDVVINF…QGERPRHSCP (71 aa)) constitute a KRAB domain. 21 C2H2-type zinc fingers span residues 158–180 (YVCI…QKAH), 186–208 (YKCN…QRIH), 214–236 (YQCS…EKIH), 242–264 (HECT…QKIH), 270–292 (YICI…RRIH), 298–320 (YECN…QRIH), 354–376 (SICT…QRIH), 382–404 (YACS…QRIH), 410–432 (YVCM…QIIH), 438–460 (YKCG…KRIH), 466–488 (YVCN…QKTH), 494–516 (YICS…QRIH), 522–544 (YECN…QKIH), 550–572 (YECH…QKIH), 578–600 (YVCT…QRIH), 606–628 (YECS…QPLH), 634–656 (YVCA…QKTH), 662–684 (YICS…HRIH), 690–712 (YECS…QRIH), 718–740 (YVCA…QTTH), and 746–768 (YKCG…QGSH).

Belongs to the krueppel C2H2-type zinc-finger protein family.

The protein localises to the nucleus. May be involved in transcriptional regulation. The sequence is that of Zinc finger protein 585B (ZNF585B) from Pongo abelii (Sumatran orangutan).